Consider the following 280-residue polypeptide: Phosphatidylglycerol--prolipoprotein diacylglyceryl transferase (280 aa).

The next 4 membrane-spanning stretches (helical) occupy residues 26 to 46 (LAIH…WFYA), 71 to 91 (FILW…ILFY), 106 to 126 (IWNG…AMIL), and 132 to 152 (GIPV…GLLF). R154 serves as a coordination point for a 1,2-diacyl-sn-glycero-3-phospho-(1'-sn-glycerol). 3 helical membrane-spanning segments follow: residues 193 to 213 (GLEG…FKAL), 217 to 237 (GTVT…VEFF), and 251 to 271 (WLTM…WAVL).

It belongs to the Lgt family.

Its subcellular location is the cell inner membrane. The enzyme catalyses L-cysteinyl-[prolipoprotein] + a 1,2-diacyl-sn-glycero-3-phospho-(1'-sn-glycerol) = an S-1,2-diacyl-sn-glyceryl-L-cysteinyl-[prolipoprotein] + sn-glycerol 1-phosphate + H(+). It participates in protein modification; lipoprotein biosynthesis (diacylglyceryl transfer). Functionally, catalyzes the transfer of the diacylglyceryl group from phosphatidylglycerol to the sulfhydryl group of the N-terminal cysteine of a prolipoprotein, the first step in the formation of mature lipoproteins. The chain is Phosphatidylglycerol--prolipoprotein diacylglyceryl transferase from Agrobacterium fabrum (strain C58 / ATCC 33970) (Agrobacterium tumefaciens (strain C58)).